The primary structure comprises 237 residues: Phosphoribosylaminoimidazole-succinocarboxamide synthase (237 aa).

It belongs to the SAICAR synthetase family.

The catalysed reaction is 5-amino-1-(5-phospho-D-ribosyl)imidazole-4-carboxylate + L-aspartate + ATP = (2S)-2-[5-amino-1-(5-phospho-beta-D-ribosyl)imidazole-4-carboxamido]succinate + ADP + phosphate + 2 H(+). It participates in purine metabolism; IMP biosynthesis via de novo pathway; 5-amino-1-(5-phospho-D-ribosyl)imidazole-4-carboxamide from 5-amino-1-(5-phospho-D-ribosyl)imidazole-4-carboxylate: step 1/2. This chain is Phosphoribosylaminoimidazole-succinocarboxamide synthase, found in Methanosarcina mazei (strain ATCC BAA-159 / DSM 3647 / Goe1 / Go1 / JCM 11833 / OCM 88) (Methanosarcina frisia).